A 258-amino-acid polypeptide reads, in one-letter code: Acyl-[acyl-carrier-protein]--UDP-N-acetylglucosamine O-acyltransferase (258 aa).

This sequence belongs to the transferase hexapeptide repeat family. LpxA subfamily. Homotrimer.

Its subcellular location is the cytoplasm. The enzyme catalyses a (3R)-hydroxyacyl-[ACP] + UDP-N-acetyl-alpha-D-glucosamine = a UDP-3-O-[(3R)-3-hydroxyacyl]-N-acetyl-alpha-D-glucosamine + holo-[ACP]. The protein operates within glycolipid biosynthesis; lipid IV(A) biosynthesis; lipid IV(A) from (3R)-3-hydroxytetradecanoyl-[acyl-carrier-protein] and UDP-N-acetyl-alpha-D-glucosamine: step 1/6. Its function is as follows. Involved in the biosynthesis of lipid A, a phosphorylated glycolipid that anchors the lipopolysaccharide to the outer membrane of the cell. In Neisseria meningitidis serogroup A / serotype 4A (strain DSM 15465 / Z2491), this protein is Acyl-[acyl-carrier-protein]--UDP-N-acetylglucosamine O-acyltransferase.